A 475-amino-acid chain; its full sequence is Ribulose bisphosphate carboxylase large chain (475 aa).

Residues 1–2 (MS) constitute a propeptide that is removed on maturation. Proline 3 bears the N-acetylproline mark. N6,N6,N6-trimethyllysine is present on lysine 14. The Proton acceptor role is filled by lysine 175. Residues lysine 175 and lysine 177 each contribute to the D-ribulose 1,5-bisphosphate site. Residues lysine 201, aspartate 203, and glutamate 204 each coordinate Mg(2+). Lysine 201 is modified (N6-carboxylysine). Glutamate 204 is a binding site for D-ribulose 1,5-bisphosphate. Histidine 294 acts as the Proton acceptor in catalysis. D-ribulose 1,5-bisphosphate is bound by residues arginine 295, histidine 327, lysine 334, serine 379, glycine 381, glycine 403, and glycine 404.

The protein belongs to the RuBisCO large chain family. Type I subfamily. Heterohexadecamer of 8 large chains and 8 small chains. Heterohexadecamer; disulfide-linked. The disulfide link is formed within the large subunit homodimers. The cofactor is Mg(2+). In terms of processing, the disulfide bond which can form in the large chain dimeric partners within the hexadecamer appears to be associated with oxidative stress and protein turnover.

The protein resides in the plastid. It localises to the chloroplast. The enzyme catalyses 2 (2R)-3-phosphoglycerate + 2 H(+) = D-ribulose 1,5-bisphosphate + CO2 + H2O. The catalysed reaction is D-ribulose 1,5-bisphosphate + O2 = 2-phosphoglycolate + (2R)-3-phosphoglycerate + 2 H(+). Functionally, ruBisCO catalyzes two reactions: the carboxylation of D-ribulose 1,5-bisphosphate, the primary event in carbon dioxide fixation, as well as the oxidative fragmentation of the pentose substrate in the photorespiration process. Both reactions occur simultaneously and in competition at the same active site. Binds to abscisic acid (ABA); only half of the possible binding sites are occupied in the crystal and there are indications this is a low affinity site. The polypeptide is Ribulose bisphosphate carboxylase large chain (Pisum sativum (Garden pea)).